Here is a 557-residue protein sequence, read N- to C-terminus: 2-succinyl-5-enolpyruvyl-6-hydroxy-3-cyclohexene-1-carboxylate synthase (557 aa).

The segment at 183 to 206 (YGGTEHPPVAPPLPPRRAPRAAAP) is disordered.

It belongs to the TPP enzyme family. MenD subfamily. In terms of assembly, homodimer. Requires Mg(2+) as cofactor. Mn(2+) serves as cofactor. It depends on thiamine diphosphate as a cofactor.

The catalysed reaction is isochorismate + 2-oxoglutarate + H(+) = 5-enolpyruvoyl-6-hydroxy-2-succinyl-cyclohex-3-ene-1-carboxylate + CO2. Its pathway is quinol/quinone metabolism; 1,4-dihydroxy-2-naphthoate biosynthesis; 1,4-dihydroxy-2-naphthoate from chorismate: step 2/7. It participates in quinol/quinone metabolism; menaquinone biosynthesis. Catalyzes the thiamine diphosphate-dependent decarboxylation of 2-oxoglutarate and the subsequent addition of the resulting succinic semialdehyde-thiamine pyrophosphate anion to isochorismate to yield 2-succinyl-5-enolpyruvyl-6-hydroxy-3-cyclohexene-1-carboxylate (SEPHCHC). This chain is 2-succinyl-5-enolpyruvyl-6-hydroxy-3-cyclohexene-1-carboxylate synthase, found in Halorhodospira halophila (strain DSM 244 / SL1) (Ectothiorhodospira halophila (strain DSM 244 / SL1)).